We begin with the raw amino-acid sequence, 370 residues long: Chaperone protein DnaJ (370 aa).

One can recognise a J domain in the interval 7-73; sequence DYYEILGVPR…QKRAMYDRFG (67 aa). The CR-type zinc finger occupies 144 to 226; sequence GTEIPIEYER…CGGSGRVLRR (83 aa). Zn(2+)-binding residues include Cys157, Cys160, Cys174, Cys177, Cys200, Cys203, Cys214, and Cys217. CXXCXGXG motif repeat units follow at residues 157-164, 174-181, 200-207, and 214-221; these read CPRCGGTG, CDECGGTG, and CHECGGSG.

The protein belongs to the DnaJ family. Homodimer. The cofactor is Zn(2+).

The protein localises to the cytoplasm. Participates actively in the response to hyperosmotic and heat shock by preventing the aggregation of stress-denatured proteins and by disaggregating proteins, also in an autonomous, DnaK-independent fashion. Unfolded proteins bind initially to DnaJ; upon interaction with the DnaJ-bound protein, DnaK hydrolyzes its bound ATP, resulting in the formation of a stable complex. GrpE releases ADP from DnaK; ATP binding to DnaK triggers the release of the substrate protein, thus completing the reaction cycle. Several rounds of ATP-dependent interactions between DnaJ, DnaK and GrpE are required for fully efficient folding. Also involved, together with DnaK and GrpE, in the DNA replication of plasmids through activation of initiation proteins. The protein is Chaperone protein DnaJ of Thermotoga neapolitana (strain ATCC 49049 / DSM 4359 / NBRC 107923 / NS-E).